We begin with the raw amino-acid sequence, 589 residues long: Muscarinic acetylcholine receptor M3 (589 aa).

Residues 1–66 (MTLHSNSTTS…DPLGGHTIWQ (66 aa)) lie on the Extracellular side of the membrane. Asparagine 6, asparagine 15, asparagine 41, asparagine 48, and asparagine 52 each carry an N-linked (GlcNAc...) asparagine glycan. A helical transmembrane segment spans residues 67–90 (VVFIAFLTGFLALVTIIGNILVIV). At 91 to 103 (AFKVNKQLKTVNN) the chain is on the cytoplasmic side. Residues 104 to 129 (YFLLSLACADLIIGVISMNLFTTYII) traverse the membrane as a helical segment. Residues 130-141 (MNRWALGNLACD) are Extracellular-facing. A disulfide bond links cysteine 140 and cysteine 220. The chain crosses the membrane as a helical span at residues 142 to 163 (LWLSIDYVASNASVMNLLVISF). Residues 164–183 (DRYFSITRPLTYRAKRTTKR) are Cytoplasmic-facing. The chain crosses the membrane as a helical span at residues 184 to 205 (AGVMIGLAWVISFVLWAPAILF). Residues 206–228 (WQYFVGKRTVPPGECFIQFLSEP) are Extracellular-facing. Residues 229–251 (TITFGTAIAAFYMPVTIMTILYW) traverse the membrane as a helical segment. Over 252 to 490 (RIYKETEKRT…SLIKEKKAAQ (239 aa)) the chain is Cytoplasmic. Positions 274–280 (AEAENFV) match the Basolateral sorting signal motif. 2 disordered regions span residues 275–295 (EAEN…YELQ) and 323–356 (AEQM…EEDI). The segment covering 283-295 (TGSSRSCSSYELQ) has biased composition (polar residues). Positions 333-344 (SDSWNNNDAAAS) are enriched in low complexity. Position 384 is a phosphoserine (serine 384). The helical transmembrane segment at 491-513 (TLSAILLAFIITWTPYNIMVLVN) threads the bilayer. Topologically, residues 514–525 (TFCDSCIPKTYW) are extracellular. A disulfide bond links cysteine 516 and cysteine 519. A helical membrane pass occupies residues 526–545 (NLGYWLCYINSTVNPVCYAL). Residues 546–589 (CNKTFRTTFKMLLLCQCDKRKRRKQQYQQRQSVIFHKRVPEQAL) are Cytoplasmic-facing.

The protein belongs to the G-protein coupled receptor 1 family. Muscarinic acetylcholine receptor subfamily. CHRM3 sub-subfamily. As to quaternary structure, homodimer; the dimers can form tetramers. Interacts with NALCN. Interacts with TMEM147. In terms of tissue distribution, expressed in cerebral cortex, submandibular gland, hypothalamus, pancreas, liver, and ileum.

The protein localises to the cell membrane. Its subcellular location is the postsynaptic cell membrane. The protein resides in the basolateral cell membrane. It is found in the endoplasmic reticulum membrane. Its function is as follows. The muscarinic acetylcholine receptor mediates various cellular responses, including inhibition of adenylate cyclase, breakdown of phosphoinositides and modulation of potassium channels through the action of G proteins. Primary transducing effect is Pi turnover. This Mus musculus (Mouse) protein is Muscarinic acetylcholine receptor M3 (Chrm3).